The following is a 161-amino-acid chain: Eukaryotic translation initiation factor 5A-1 (161 aa).

Residues 1 to 12 (MSDEEHQFESKA) are compositionally biased toward basic and acidic residues. The tract at residues 1 to 21 (MSDEEHQFESKADAGASKTYP) is disordered. At Lys-52 the chain carries Hypusine.

This sequence belongs to the eIF-5A family. Lys-52 undergoes hypusination, a unique post-translational modification that consists in the addition of a butylamino group from spermidine to lysine side chain, leading to the formation of the unusual amino acid hypusine. eIF-5As are the only known proteins to undergo this modification, which is essential for their function.

Its function is as follows. Translation factor that promotes translation elongation and termination, particularly upon ribosome stalling at specific amino acid sequence contexts. Binds between the exit (E) and peptidyl (P) site of the ribosome and promotes rescue of stalled ribosome: specifically required for efficient translation of polyproline-containing peptides as well as other motifs that stall the ribosome. Acts as a ribosome quality control (RQC) cofactor by joining the RQC complex to facilitate peptidyl transfer during CAT tailing step. In Medicago sativa (Alfalfa), this protein is Eukaryotic translation initiation factor 5A-1.